The chain runs to 110 residues: Keratin, type I cytoskeletal 19 (110 aa).

Residues Phe-1–Arg-8 are head. Ser-3 carries the phosphoserine modification. The IF rod domain occupies Phe-7–Arg-110. Residue Arg-8 is modified to Omega-N-methylarginine. The segment at Ile-9–Trp-42 is coil 1A. Positions Tyr-43–Lys-45 are linker 1. A coil 1B region spans residues Ile-46–Leu-83. The interval Ala-85 to Arg-110 is coil 2. Residues Ala-85 to Arg-110 are necessary for interaction with PNN.

It belongs to the intermediate filament family. As to quaternary structure, heterotetramer of two type I and two type II keratins. Interacts with PNN and the actin-binding domain of DMD.

Its function is as follows. Involved in the organization of myofibers. Together with KRT8, helps to link the contractile apparatus to dystrophin at the costameres of striated muscle. This Mesocricetus auratus (Golden hamster) protein is Keratin, type I cytoskeletal 19.